The sequence spans 350 residues: MSKLLKPKREVGIIGYGAYVPMYRIKAEEIGRVWGVSSFPIQEKSVPGLDEDTITIGIEAARNALKRAQIDPKLIRAIWLGTESKPYAVKPSGTVIAEAIGATPDLDAADFEFACKAGTEAIQAAIGFVGSGMADYAMAIGADTSQGRPGDHLEFTAAAGGAAYILAPKSSETLAYFEASYSYVTDTPDFWRRQHEHYPRHGNRFTGEPAYFHQIINAAKTLMEELGYTPNDFDYAVFHQPNVKFPLTAAKILGFPKEKVLPGLLSGIIGNTYSGATLVGVSAVLDIAKPGDRILWVSFGSGAGSDAFSLVVQDAIEEKRDLAPKTMDYVNRKKYIDYALYAKHRGKYIL.

Catalysis depends on Glu83, which acts as the Proton donor/acceptor. Catalysis depends on Cys115, which acts as the Acyl-thioester intermediate. Residues Cys115 and Thr156 each coordinate (3S)-3-hydroxy-3-methylglutaryl-CoA. A CoA-binding site is contributed by Arg204. The (3S)-3-hydroxy-3-methylglutaryl-CoA site is built by Thr206 and His239. His239 serves as the catalytic Proton donor/acceptor. Position 244 (Lys244) interacts with CoA. (3S)-3-hydroxy-3-methylglutaryl-CoA contacts are provided by Asn271 and Ser301.

It belongs to the thiolase-like superfamily. Archaeal HMG-CoA synthase family. Interacts with acetoacetyl-CoA thiolase that catalyzes the precedent step in the pathway and with a DUF35 protein. The acetoacetyl-CoA thiolase/HMG-CoA synthase complex channels the intermediate via a fused CoA-binding site, which allows for efficient coupling of the endergonic thiolase reaction with the exergonic HMGCS reaction.

The enzyme catalyses acetoacetyl-CoA + acetyl-CoA + H2O = (3S)-3-hydroxy-3-methylglutaryl-CoA + CoA + H(+). It participates in metabolic intermediate biosynthesis; (R)-mevalonate biosynthesis; (R)-mevalonate from acetyl-CoA: step 2/3. Its function is as follows. Catalyzes the condensation of acetyl-CoA with acetoacetyl-CoA to form 3-hydroxy-3-methylglutaryl-CoA (HMG-CoA). Functions in the mevalonate (MVA) pathway leading to isopentenyl diphosphate (IPP), a key precursor for the biosynthesis of isoprenoid compounds that are building blocks of archaeal membrane lipids. The sequence is that of Hydroxymethylglutaryl-CoA synthase from Thermococcus kodakarensis (strain ATCC BAA-918 / JCM 12380 / KOD1) (Pyrococcus kodakaraensis (strain KOD1)).